Reading from the N-terminus, the 624-residue chain is Coagulation factor XI (624 aa).

The N-terminal stretch at 1 to 18 (MTSLHQVLYFIFFASVSS) is a signal peptide. Apple domains lie at 20-103 (CVTK…FKQC), 110-193 (CSKD…LKSC), 200-283 (CIRD…LQHC), and 291-376 (CHPS…LRLC). Cystine bridges form between cysteine 20/cysteine 103, cysteine 46/cysteine 76, cysteine 50/cysteine 56, cysteine 110/cysteine 193, cysteine 136/cysteine 165, cysteine 140/cysteine 146, cysteine 200/cysteine 283, cysteine 226/cysteine 255, cysteine 230/cysteine 236, cysteine 291/cysteine 376, cysteine 317/cysteine 348, cysteine 321/cysteine 327, cysteine 382/cysteine 499, cysteine 415/cysteine 431, cysteine 513/cysteine 580, cysteine 544/cysteine 559, and cysteine 570/cysteine 598. N-linked (GlcNAc...) asparagine glycans are attached at residues asparagine 90 and asparagine 126. Asparagine 297 is a glycosylation site (N-linked (GlcNAc...) asparagine). Residues 390 to 622 (VVGGAASVHG…YVDWILEKTQ (233 aa)) form the Peptidase S1 domain. The Charge relay system role is filled by histidine 430. Asparagine 449 is a glycosylation site (N-linked (GlcNAc...) asparagine). The Charge relay system role is filled by aspartate 479. Asparagine 490 carries an N-linked (GlcNAc...) asparagine glycan. 547-550 (RYRR) provides a ligand contact to heparin. The active-site Charge relay system is the serine 574.

The protein belongs to the peptidase S1 family. Plasma kallikrein subfamily. As to quaternary structure, homodimer; disulfide-linked. After activation the heavy and light chains are also linked by a disulfide bond. Interacts (activated) with F9 (inactive and activated) in calcium-dependent manner. Forms a heterodimer with SERPINA5. Post-translationally, activated by factor XIIa (or XII), which cleaves each polypeptide after Arg-389 into the light chain, which contains the active site, and the heavy chain, which associates with high molecular weight (HMW) kininogen. Activated by F12 (activated); the presence of negatively charged surfaces accelerates activation. Activated by F2 (thrombin); the presence of negatively charged surfaces, such as polyphosphate and dextran sulfate, strongly accelerates activation. Autoactivated; the presence of negatively charged surfaces, such as polyphosphate and dextran sulfate, accelerates autoactivation and autolysis. In terms of processing, N-glycosylated on both chains. N-glycosylated sites mainly consist of nonfucosylated sialylated biantennary (in high abundance) and/or triantennary (in low abundance) complex structures.

The protein localises to the secreted. It catalyses the reaction Selective cleavage of Arg-|-Ala and Arg-|-Val bonds in factor IX to form factor IXa.. Inhibited by SERPINA5. In terms of biological role, factor XI triggers the middle phase of the intrinsic pathway of blood coagulation by activating factor IX. In Mus musculus (Mouse), this protein is Coagulation factor XI (F11).